Consider the following 209-residue polypeptide: Uracil phosphoribosyltransferase (209 aa).

Residues arginine 79, arginine 104, and 131–139 (DPMLATGGT) contribute to the 5-phospho-alpha-D-ribose 1-diphosphate site. Uracil contacts are provided by residues isoleucine 194 and 199 to 201 (GDA). Aspartate 200 provides a ligand contact to 5-phospho-alpha-D-ribose 1-diphosphate.

Belongs to the UPRTase family. It depends on Mg(2+) as a cofactor.

The catalysed reaction is UMP + diphosphate = 5-phospho-alpha-D-ribose 1-diphosphate + uracil. It functions in the pathway pyrimidine metabolism; UMP biosynthesis via salvage pathway; UMP from uracil: step 1/1. With respect to regulation, allosterically activated by GTP. In terms of biological role, catalyzes the conversion of uracil and 5-phospho-alpha-D-ribose 1-diphosphate (PRPP) to UMP and diphosphate. This chain is Uracil phosphoribosyltransferase, found in Pseudoalteromonas atlantica (strain T6c / ATCC BAA-1087).